We begin with the raw amino-acid sequence, 374 residues long: Regulator of G-protein signaling 20 (374 aa).

A compositionally biased stretch (polar residues) spans 1–11 (MPRLSQDNQQG). Disordered regions lie at residues 1–21 (MPRL…RPSR) and 135–158 (PPGG…PPMG). Residues 12 to 21 (HQKHFSRPSR) show a composition bias toward basic residues. In terms of domain architecture, RGS spans 248–364 (SFDKLMLTPA…MNSALYKDLL (117 aa)).

Forms a complex with G(alpha)z/i2 subunits and mu-opioid receptors; the formation of this complex results in mu-opioid receptor desensitization. Interacts with OPRM1. Fatty acylated. Heavily palmitoylated in the cysteine string motif. In terms of processing, N- and O-glycosylated in synapsomal membranes. Post-translationally, serine phosphorylated in synapsomal membranes. Sumoylated with SUMO1 and SUMO2 in synaptosomes. The sumoylated forms act as a scaffold for sequestering mu-opioid receptor-activated G(alpha) subunits. In terms of tissue distribution, retinal-specific. Expressed throughout the retina, including photoreceptors.

It localises to the membrane. The protein resides in the nucleus. Its subcellular location is the cytoplasm. In terms of biological role, inhibits signal transduction by increasing the GTPase activity of G protein alpha subunits thereby driving them into their inactive GDP-bound form. Binds selectively to G(z)-alpha and G(alpha)-i2 subunits, accelerates their GTPase activity and regulates their signaling activities. The G(z)-alpha activity is inhibited by the phosphorylation and palmitoylation of the G-protein. Negatively regulates mu-opioid receptor-mediated activation of the G-proteins. The chain is Regulator of G-protein signaling 20 (RGS20) from Bos taurus (Bovine).